Consider the following 655-residue polypeptide: Phosphatidylinositol-3,5-bisphosphate 3-phosphatase MTMR6 (655 aa).

The 101-residue stretch at 1–101 (MEHIRTTKVE…YNSLLQLSKQ (101 aa)) folds into the GRAM domain. The interaction with RAB1B stretch occupies residues 2–141 (EHIRTTKVEQ…AEYERMGVPN (140 aa)). Residue Y108 is modified to Phosphotyrosine. Residues 124–537 (GWQLIDLAAE…FNFKFWRNMY (414 aa)) form the Myotubularin phosphatase domain. N286, N311, and I312 together coordinate a 1,2-diacyl-sn-glycero-3-phospho-(1D-myo-inositol-3,5-bisphosphate). 3 residues coordinate a 1,2-diacyl-sn-glycero-3-phospho-(1D-myo-inositol-3-phosphate): N286, N311, and I312. Residue C374 is the Phosphocysteine intermediate of the active site. Positions 375, 376, 377, 378, 379, 380, 416, and 420 each coordinate a 1,2-diacyl-sn-glycero-3-phospho-(1D-myo-inositol-3,5-bisphosphate). S375, D376, G377, W378, D379, and R380 together coordinate a 1,2-diacyl-sn-glycero-3-phospho-(1D-myo-inositol-3-phosphate). Position 420 (R420) interacts with a 1,2-diacyl-sn-glycero-3-phospho-(1D-myo-inositol-3-phosphate). Residues 547-581 (RQSVLNIIMNMNEQNKQLEEDVKDLEAKIKQCKSG) are a coiled coil. 3 positions are modified to phosphoserine: S595, S623, and S645.

It belongs to the protein-tyrosine phosphatase family. Non-receptor class myotubularin subfamily. In terms of assembly, homodimer. Heterodimer (via C-terminus) with MTMR9 (via C-terminus). Interacts with ALKBH4. Interacts with KCNN4. Interacts (via GRAM domain) with RAB1B (in GDP-bound form); the interaction regulates MTMR6 recruitment to the endoplasmic reticulum-Golgi intermediate compartment.

The protein localises to the cytoplasm. Its subcellular location is the endoplasmic reticulum. The protein resides in the cell projection. It localises to the ruffle membrane. It is found in the endoplasmic reticulum-Golgi intermediate compartment. The protein localises to the perinuclear region. It catalyses the reaction a 1,2-diacyl-sn-glycero-3-phospho-(1D-myo-inositol-3,5-bisphosphate) + H2O = a 1,2-diacyl-sn-glycero-3-phospho-(1D-myo-inositol-5-phosphate) + phosphate. It carries out the reaction a 1,2-diacyl-sn-glycero-3-phospho-(1D-myo-inositol-3-phosphate) + H2O = a 1,2-diacyl-sn-glycero-3-phospho-(1D-myo-inositol) + phosphate. The enzyme catalyses 1,2-dioctanoyl-sn-glycero-3-phospho-(1D-myo-inositol-3,5-bisphosphate) + H2O = 1,2-dioctanoyl-sn-glycero-3-phospho-(1D-myo-inositol-5-phosphate) + phosphate. The catalysed reaction is 1,2-dioctanoyl-sn-glycero-3-phospho-(1-D-myo-inositol-3-phosphate) + H2O = 1,2-dioctanoyl-sn-glycero-3-phospho-(1D-myo-inositol) + phosphate. Its activity is regulated as follows. Allosterically activated by phosphatidylserine and/or phosphatidylinositol 4-phosphate (PtdIns(4)P), and phosphatidylinositol 5-phosphate (PtdIns(5)P). Interaction with MTMR9 increases catalytic activity towards phosphatidylinositol 3,5-bisphosphate. Lipid phosphatase that specifically dephosphorylates the D-3 position of phosphatidylinositol 3-phosphate and phosphatidylinositol 3,5-bisphosphate, generating phosphatidylinositol and phosphatidylinositol 5-phosphate. Binds with high affinity to phosphatidylinositol 3,5-bisphosphate (PtdIns(3,5)P2) but also to phosphatidylinositol 3-phosphate (PtdIns(3)P), phosphatidylinositol 4-phosphate (PtdIns(4)P), and phosphatidylinositol 5-phosphate (PtdIns(5)P), phosphatidic acid and phosphatidylserine. Negatively regulates ER-Golgi protein transport. Probably in association with MTMR9, plays a role in the late stages of macropinocytosis by dephosphorylating phosphatidylinositol 3-phosphate in membrane ruffles. Acts as a negative regulator of KCNN4/KCa3.1 channel activity in CD4(+) T-cells possibly by decreasing intracellular levels of phosphatidylinositol 3-phosphate. Negatively regulates proliferation of reactivated CD4(+) T-cells. In complex with MTMR9, negatively regulates DNA damage-induced apoptosis. The formation of the MTMR6-MTMR9 complex stabilizes both MTMR6 and MTMR9 protein levels. The chain is Phosphatidylinositol-3,5-bisphosphate 3-phosphatase MTMR6 from Rattus norvegicus (Rat).